Here is a 392-residue protein sequence, read N- to C-terminus: Glutamine synthetase (392 aa).

In terms of domain architecture, GS beta-grasp spans 26 to 106 (VQVTYVWIDG…VMCEVLKYNR (81 aa)). Positions 113 to 392 (LRHTCKKIME…MASPRDAAVF (280 aa)) constitute a GS catalytic domain. ATP is bound at residue glutamate 134. 4 residues coordinate Mn(2+): glutamate 134, glutamate 136, glutamate 196, and glutamate 203. 203-208 (EFQVGP) contacts ATP. 246-247 (NW) provides a ligand contact to L-glutamate. Histidine 253 is a binding site for Mn(2+). Residues 255–257 (NYS), arginine 319, and arginine 324 each bind ATP. L-glutamate is bound at residue arginine 319. 336–338 (YFE) contacts ADP. Glutamate 338 is a binding site for Mn(2+). Arginine 340 contacts L-glutamate.

This sequence belongs to the glutamine synthetase family. The cofactor is Mg(2+). Mn(2+) is required as a cofactor.

The protein localises to the cytoplasm. Its subcellular location is the cytosol. It localises to the microsome. It is found in the mitochondrion. It carries out the reaction L-glutamate + NH4(+) + ATP = L-glutamine + ADP + phosphate + H(+). Functionally, glutamine synthetase that catalyzes the ATP-dependent conversion of glutamate and ammonia to glutamine. The polypeptide is Glutamine synthetase (Xenopus laevis (African clawed frog)).